Here is a 98-residue protein sequence, read N- to C-terminus: Large ribosomal subunit protein uL23 (98 aa).

It belongs to the universal ribosomal protein uL23 family. Part of the 50S ribosomal subunit. Contacts protein L29, and trigger factor when it is bound to the ribosome.

Functionally, one of the early assembly proteins it binds 23S rRNA. One of the proteins that surrounds the polypeptide exit tunnel on the outside of the ribosome. Forms the main docking site for trigger factor binding to the ribosome. The protein is Large ribosomal subunit protein uL23 of Rickettsia typhi (strain ATCC VR-144 / Wilmington).